Reading from the N-terminus, the 69-residue chain is Omega-oxotoxin-Ol1a (69 aa).

Residues 1–68 (DWECLPLHSS…GKINTCDKYK (68 aa)) enclose the Oxytoxin-type inhibitor cystine knot (ICK) domain. Disulfide bonds link C4–C18, C11–C23, C15–C64, C17–C52, and C25–C50. N69 is subject to Asparagine amide.

The protein belongs to the spiderine family. Spiderine subfamily. Expressed by the venom gland.

It is found in the secreted. In terms of biological role, weak blocker of vertebrate P/Q-, N- and L-type voltage-gated calcium channels (Cav1 and Cav2). Is both paralytic and lethal when injected into lepidopteran larvae. Is not toxic to mice. This chain is Omega-oxotoxin-Ol1a, found in Oxyopes lineatus (Lynx spider).